We begin with the raw amino-acid sequence, 293 residues long: Ribosomal protein L11 methyltransferase (293 aa).

S-adenosyl-L-methionine-binding residues include Thr-145, Gly-166, Asp-188, and Asn-229.

The protein belongs to the methyltransferase superfamily. PrmA family.

The protein resides in the cytoplasm. The enzyme catalyses L-lysyl-[protein] + 3 S-adenosyl-L-methionine = N(6),N(6),N(6)-trimethyl-L-lysyl-[protein] + 3 S-adenosyl-L-homocysteine + 3 H(+). Methylates ribosomal protein L11. The protein is Ribosomal protein L11 methyltransferase of Idiomarina loihiensis (strain ATCC BAA-735 / DSM 15497 / L2-TR).